Consider the following 211-residue polypeptide: MTIGVVGRKCGMTRIFTEEGVSIPVTVIEVEPNRVTQFKTEETDGYRAVQVTAGERRASRVTKAQAGHFAKANVAAGRGVWEFRLGEEQYAAGDQITVDLFQAGQMVDVTGESKGKGFAGTIKRWNFRGQDNTHGNSVSHRVPGSIGQCQTPGRVFKGKKMSGHLGAERVTVQSLEIVRVDAERNLLLVKGAVPGATGGDVIVRPAAKARG.

The residue at position 150 (Gln150) is an N5-methylglutamine.

The protein belongs to the universal ribosomal protein uL3 family. Part of the 50S ribosomal subunit. Forms a cluster with proteins L14 and L19. Methylated by PrmB.

One of the primary rRNA binding proteins, it binds directly near the 3'-end of the 23S rRNA, where it nucleates assembly of the 50S subunit. The chain is Large ribosomal subunit protein uL3 from Pseudomonas aeruginosa (strain LESB58).